We begin with the raw amino-acid sequence, 270 residues long: Tryptophan synthase alpha chain (270 aa).

Residues Glu60 and Asp71 each act as proton acceptor in the active site.

It belongs to the TrpA family. As to quaternary structure, tetramer of two alpha and two beta chains.

The enzyme catalyses (1S,2R)-1-C-(indol-3-yl)glycerol 3-phosphate + L-serine = D-glyceraldehyde 3-phosphate + L-tryptophan + H2O. Its pathway is amino-acid biosynthesis; L-tryptophan biosynthesis; L-tryptophan from chorismate: step 5/5. Its function is as follows. The alpha subunit is responsible for the aldol cleavage of indoleglycerol phosphate to indole and glyceraldehyde 3-phosphate. The chain is Tryptophan synthase alpha chain from Deinococcus radiodurans (strain ATCC 13939 / DSM 20539 / JCM 16871 / CCUG 27074 / LMG 4051 / NBRC 15346 / NCIMB 9279 / VKM B-1422 / R1).